The sequence spans 475 residues: Tubulin epsilon chain (475 aa).

148-154 is a binding site for GTP; it reads GGGTGSG.

Belongs to the tubulin family. As to quaternary structure, found in a complex with TEDC1, TEDC2, TUBE1 and TUBD1.

The protein localises to the cytoplasm. The protein resides in the cytoskeleton. It is found in the microtubule organizing center. It localises to the centrosome. This chain is Tubulin epsilon chain (TUBE1), found in Homo sapiens (Human).